Reading from the N-terminus, the 334-residue chain is Malate dehydrogenase, cytoplasmic (334 aa).

N-acetylserine is present on Ser2. Residues 11 to 17 and Asp42 contribute to the NAD(+) site; that span reads GAAGQIA. Substrate-binding residues include Arg92 and Arg98. Asn105 serves as a coordination point for NAD(+). Residue Lys110 is modified to N6-succinyllysine. Residue Gln112 participates in NAD(+) binding. N6-acetyllysine occurs at positions 118 and 121. Position 129 to 131 (129 to 131) interacts with NAD(+); that stretch reads VGN. Substrate contacts are provided by Asn131 and Arg162. His187 acts as the Proton acceptor in catalysis. Lys214 carries the N6-succinyllysine modification. Phosphoserine is present on Ser217. Position 230 is an omega-N-methylarginine (Arg230). A Phosphoserine modification is found at Ser241. Residue Lys298 is modified to N6-acetyllysine; alternate. Lys298 carries the N6-succinyllysine; alternate modification. Residue Ser309 is modified to Phosphoserine. The residue at position 318 (Lys318) is an N6-succinyllysine. Ser333 carries the post-translational modification Phosphoserine.

This sequence belongs to the LDH/MDH superfamily. MDH type 2 family. In terms of assembly, homodimer. Post-translationally, ISGylated. In terms of processing, acetylation at Lys-118 dramatically enhances enzymatic activity and promotes adipogenic differentiation.

It is found in the cytoplasm. It localises to the cytosol. The catalysed reaction is (S)-malate + NAD(+) = oxaloacetate + NADH + H(+). The enzyme catalyses (2R)-2-hydroxy-3-(4-hydroxyphenyl)propanoate + NAD(+) = 3-(4-hydroxyphenyl)pyruvate + NADH + H(+). It carries out the reaction (S)-2-hydroxyglutarate + NAD(+) = 2-oxoglutarate + NADH + H(+). Catalyzes the reduction of aromatic alpha-keto acids in the presence of NADH. Plays essential roles in the malate-aspartate shuttle and the tricarboxylic acid cycle, important in mitochondrial NADH supply for oxidative phosphorylation. Catalyzes the reduction of 2-oxoglutarate to 2-hydroxyglutarate, leading to elevated reactive oxygen species (ROS). The protein is Malate dehydrogenase, cytoplasmic (MDH1) of Bos taurus (Bovine).